Consider the following 264-residue polypeptide: S-adenosylmethionine decarboxylase proenzyme (264 aa).

The active-site Schiff-base intermediate with substrate; via pyruvic acid is serine 111. Serine 111 is modified (pyruvic acid (Ser); by autocatalysis). Histidine 116 acts as the Proton acceptor; for processing activity in catalysis. Cysteine 139 acts as the Proton donor; for catalytic activity in catalysis.

It belongs to the prokaryotic AdoMetDC family. Type 2 subfamily. Heterooctamer of four alpha and four beta chains arranged as a tetramer of alpha/beta heterodimers. It depends on pyruvate as a cofactor. In terms of processing, is synthesized initially as an inactive proenzyme. Formation of the active enzyme involves a self-maturation process in which the active site pyruvoyl group is generated from an internal serine residue via an autocatalytic post-translational modification. Two non-identical subunits are generated from the proenzyme in this reaction, and the pyruvate is formed at the N-terminus of the alpha chain, which is derived from the carboxyl end of the proenzyme. The post-translation cleavage follows an unusual pathway, termed non-hydrolytic serinolysis, in which the side chain hydroxyl group of the serine supplies its oxygen atom to form the C-terminus of the beta chain, while the remainder of the serine residue undergoes an oxidative deamination to produce ammonia and the pyruvoyl group blocking the N-terminus of the alpha chain.

The enzyme catalyses S-adenosyl-L-methionine + H(+) = S-adenosyl 3-(methylsulfanyl)propylamine + CO2. It participates in amine and polyamine biosynthesis; S-adenosylmethioninamine biosynthesis; S-adenosylmethioninamine from S-adenosyl-L-methionine: step 1/1. Functionally, catalyzes the decarboxylation of S-adenosylmethionine to S-adenosylmethioninamine (dcAdoMet), the propylamine donor required for the synthesis of the polyamines spermine and spermidine from the diamine putrescine. The protein is S-adenosylmethionine decarboxylase proenzyme of Geobacillus thermodenitrificans (strain NG80-2).